Reading from the N-terminus, the 25-residue chain is Fructokinase-1 (25 aa).

This sequence belongs to the ROK (NagC/XylR) family. Homodimer. The cofactor is Mg(2+).

The enzyme catalyses D-fructose + ATP = D-fructose 6-phosphate + ADP + H(+). With respect to regulation, inhibition by zinc ions (Potential). Inactivated by EDTA. This Lactococcus lactis subsp. lactis (Streptococcus lactis) protein is Fructokinase-1.